A 1136-amino-acid chain; its full sequence is Tyrosine-protein kinase receptor Tie-1 (1136 aa).

Positions Met1–Val23 are cleaved as a signal peptide. Topologically, residues Asp24–Gln757 are extracellular. In terms of domain architecture, Ig-like C2-type 1 spans Cys43–Cys106. 2 N-linked (GlcNAc...) asparagine glycosylation sites follow: Asn84 and Asn159. EGF-like domains follow at residues Gly212–Glu254, Ala256–Gln301, and Ala303–Glu343. Intrachain disulfides connect Cys226-Cys235, Cys229-Cys242, and Cys244-Cys253. 3 disulfide bridges follow: Cys317-Cys325, Cys319-Cys331, and Cys333-Cys342. In terms of domain architecture, Ig-like C2-type 2 spans Cys370–Cys424. Fibronectin type-III domains follow at residues Pro444–Pro543, Lys546–Ser640, and Ala644–Asn737. N-linked (GlcNAc...) asparagine glycans are attached at residues Asn501, Asn594, and Asn707. The chain crosses the membrane as a helical span at residues Gln758 to Ala782. Over Cys783–Ala1136 the chain is Cytoplasmic. A Protein kinase domain is found at Ile837–Val1116. ATP-binding positions include Ile843 to Val851 and Lys868. Asp977 serves as the catalytic Proton acceptor. At Tyr1005 the chain carries Phosphotyrosine; by autocatalysis.

Belongs to the protein kinase superfamily. Tyr protein kinase family. Tie subfamily. Heterodimer with TEK/TIE2. Interacts with SVEP1 (via C-terminus). In terms of processing, phosphorylated on tyrosine residues in response to ANGPT1, most likely by TEK/TIE2. Specifically expressed in developing vascular endothelial cells.

It localises to the cell membrane. It carries out the reaction L-tyrosyl-[protein] + ATP = O-phospho-L-tyrosyl-[protein] + ADP + H(+). Functionally, transmembrane tyrosine-protein kinase that may modulate TEK/TIE2 activity and contribute to the regulation of angiogenesis. The polypeptide is Tyrosine-protein kinase receptor Tie-1 (TIE1) (Bos taurus (Bovine)).